A 261-amino-acid chain; its full sequence is Gap junction beta-6 protein (261 aa).

Over 1-22 (MDWGTLHTVIGGVNKHSTSIGK) the chain is Cytoplasmic. A helical membrane pass occupies residues 23 to 45 (VWITVIFIFRVMILVVAAQEVWG). Over 46-75 (DEQEDFVCNTLQPGCKNVCYDHFFPVSHIR) the chain is Extracellular. The helical transmembrane segment at 76-98 (LWALQLIFVSTPALLVAMHVAYY) threads the bilayer. Over 99 to 131 (RHETARKFIRGEKRNEFKDLEDIKRQKVRIEGS) the chain is Cytoplasmic. A helical membrane pass occupies residues 132–154 (LWWTYTSSIFFRIIFEAAFMYVF). The Extracellular portion of the chain corresponds to 155-192 (YFLYNGYHLPWVLKCGIDPCPNLVDCFISRPTEKTVFT). Residues 193–215 (VFMISASVICMLLNVAELCYLLL) form a helical membrane-spanning segment. The Cytoplasmic segment spans residues 216-261 (KLCFRRSKRTQAQRNHPNHALKESKQNEMNELISDSGQNAITSFPS).

The protein belongs to the connexin family. Beta-type (group I) subfamily. A connexon is composed of a hexamer of connexins. Interacts with CNST. Highly expressed in adult brain and skin. Less in uterus, lung and eye. Very low in testis and sciatic nerve. No expression before birth.

The protein resides in the cell membrane. The protein localises to the cell junction. Its subcellular location is the gap junction. Its function is as follows. One gap junction consists of a cluster of closely packed pairs of transmembrane channels, the connexons, through which materials of low MW diffuse from one cell to a neighboring cell. The polypeptide is Gap junction beta-6 protein (Gjb6) (Mus musculus (Mouse)).